The following is a 368-amino-acid chain: Alanine racemase (368 aa).

The active-site Proton acceptor; specific for D-alanine is Lys-40. The residue at position 40 (Lys-40) is an N6-(pyridoxal phosphate)lysine. Arg-134 is a substrate binding site. Tyr-263 serves as the catalytic Proton acceptor; specific for L-alanine. Met-310 is a substrate binding site.

Belongs to the alanine racemase family. Requires pyridoxal 5'-phosphate as cofactor.

The catalysed reaction is L-alanine = D-alanine. The protein operates within amino-acid biosynthesis; D-alanine biosynthesis; D-alanine from L-alanine: step 1/1. In terms of biological role, catalyzes the interconversion of L-alanine and D-alanine. May also act on other amino acids. The chain is Alanine racemase (alr) from Listeria monocytogenes serotype 4a (strain HCC23).